Reading from the N-terminus, the 276-residue chain is Putative pyruvate, phosphate dikinase regulatory protein (276 aa).

152-159 (GISRTSKT) contacts ADP.

This sequence belongs to the pyruvate, phosphate/water dikinase regulatory protein family. PDRP subfamily.

It catalyses the reaction N(tele)-phospho-L-histidyl/L-threonyl-[pyruvate, phosphate dikinase] + ADP = N(tele)-phospho-L-histidyl/O-phospho-L-threonyl-[pyruvate, phosphate dikinase] + AMP + H(+). The enzyme catalyses N(tele)-phospho-L-histidyl/O-phospho-L-threonyl-[pyruvate, phosphate dikinase] + phosphate + H(+) = N(tele)-phospho-L-histidyl/L-threonyl-[pyruvate, phosphate dikinase] + diphosphate. In terms of biological role, bifunctional serine/threonine kinase and phosphorylase involved in the regulation of the pyruvate, phosphate dikinase (PPDK) by catalyzing its phosphorylation/dephosphorylation. The chain is Putative pyruvate, phosphate dikinase regulatory protein from Staphylococcus carnosus (strain TM300).